A 214-amino-acid polypeptide reads, in one-letter code: UPF0725 protein At1g19565 (214 aa).

The disordered stretch occupies residues 56-92; sequence EEEYEPSLPSSESPTDSCHADHESPDSPKYQQPAPGE.

This sequence belongs to the UPF0725 (EMB2204) family.

This is UPF0725 protein At1g19565 from Arabidopsis thaliana (Mouse-ear cress).